The sequence spans 251 residues: Triosephosphate isomerase (251 aa).

Position 12–14 (12–14 (NWK)) interacts with substrate. The active-site Electrophile is the H98. The active-site Proton acceptor is E168. Substrate is bound by residues G174, S213, and 234–235 (GG).

Belongs to the triosephosphate isomerase family. Homodimer.

The protein localises to the cytoplasm. The enzyme catalyses D-glyceraldehyde 3-phosphate = dihydroxyacetone phosphate. It functions in the pathway carbohydrate biosynthesis; gluconeogenesis. It participates in carbohydrate degradation; glycolysis; D-glyceraldehyde 3-phosphate from glycerone phosphate: step 1/1. In terms of biological role, involved in the gluconeogenesis. Catalyzes stereospecifically the conversion of dihydroxyacetone phosphate (DHAP) to D-glyceraldehyde-3-phosphate (G3P). The chain is Triosephosphate isomerase from Bradyrhizobium diazoefficiens (strain JCM 10833 / BCRC 13528 / IAM 13628 / NBRC 14792 / USDA 110).